We begin with the raw amino-acid sequence, 257 residues long: Phycoerythrobilin:ferredoxin oxidoreductase (257 aa).

Belongs to the HY2 family.

The enzyme catalyses (3Z)-phycoerythrobilin + oxidized 2[4Fe-4S]-[ferredoxin] = 15,16-dihydrobiliverdin + reduced 2[4Fe-4S]-[ferredoxin] + 2 H(+). Functionally, catalyzes the two-electron reduction of the C2 and C3(1) diene system of 15,16-dihydrobiliverdin. The polypeptide is Phycoerythrobilin:ferredoxin oxidoreductase (pebB) (Synechococcus sp. (strain WH8020)).